Reading from the N-terminus, the 234-residue chain is 7-carboxy-7-deazaguanine synthase (234 aa).

Positions 1–28 are disordered; the sequence is MPLNCDTKTAGEISSSIPSGSGSHQPAA. Over residues 13–23 the composition is skewed to low complexity; that stretch reads ISSSIPSGSGS. Substrate contacts are provided by residues 42–44 and Arg57; that span reads LQG. The Radical SAM core domain occupies 48 to 234; the sequence is TSGYPTIFIR…LQLHKFIGLP (187 aa). 3 residues coordinate [4Fe-4S] cluster: Cys61, Cys65, and Cys68. Thr70 provides a ligand contact to Mg(2+). Thr100 serves as a coordination point for substrate. Residue Gly102 coordinates S-adenosyl-L-methionine. Pro234 contacts substrate.

It belongs to the radical SAM superfamily. 7-carboxy-7-deazaguanine synthase family. As to quaternary structure, homodimer. [4Fe-4S] cluster serves as cofactor. Requires S-adenosyl-L-methionine as cofactor. The cofactor is Mg(2+).

The enzyme catalyses 6-carboxy-5,6,7,8-tetrahydropterin + H(+) = 7-carboxy-7-deazaguanine + NH4(+). The protein operates within purine metabolism; 7-cyano-7-deazaguanine biosynthesis. Functionally, catalyzes the complex heterocyclic radical-mediated conversion of 6-carboxy-5,6,7,8-tetrahydropterin (CPH4) to 7-carboxy-7-deazaguanine (CDG), a step common to the biosynthetic pathways of all 7-deazapurine-containing compounds. The chain is 7-carboxy-7-deazaguanine synthase from Methanospirillum hungatei JF-1 (strain ATCC 27890 / DSM 864 / NBRC 100397 / JF-1).